A 529-amino-acid chain; its full sequence is Glucocorticoid modulatory element-binding protein 2 (529 aa).

An SAND domain is found at 80–162 (EEGENLEAEI…RKIMDSGELD (83 aa)). Cys-109 is a Zn(2+) binding site. Residues Lys-135, Lys-139, Lys-142, and Arg-153 each coordinate DNA. Residue Lys-154 forms a Glycyl lysine isopeptide (Lys-Gly) (interchain with G-Cter in SUMO1); alternate linkage. Lys-154 is covalently cross-linked (Glycyl lysine isopeptide (Lys-Gly) (interchain with G-Cter in SUMO2); alternate). Residues His-166, Cys-170, and Cys-174 each contribute to the Zn(2+) site. Residues 244-347 (LLDEVIQEFQ…HLSNVLMTLT (104 aa)) are a coiled coil. Residue Ser-372 is modified to Phosphoserine.

Homodimer, and heterodimer of GMEB1 and GMEB2. Interacts with the glucocorticoid receptor (NR3C1). May interact with CREB-binding protein (CBP).

The protein resides in the nucleus. It localises to the cytoplasm. Trans-acting factor that binds to glucocorticoid modulatory elements (GME) present in the TAT (tyrosine aminotransferase) promoter and increases sensitivity to low concentrations of glucocorticoids. Also binds to the transferrin receptor promoter. The chain is Glucocorticoid modulatory element-binding protein 2 (Gmeb2) from Rattus norvegicus (Rat).